The chain runs to 230 residues: RING finger protein 141 (230 aa).

The segment at Glu154 to Cys191 adopts an RING-type zinc-finger fold.

This chain is RING finger protein 141 (RNF141), found in Gallus gallus (Chicken).